The sequence spans 816 residues: DNA helicase MCM8 (816 aa).

The segment at 1–52 (MNGKYRGRGFGQGRFQSWKSGRGGRGFSGKWREREHRPDLNKATGKHPEQTP) is disordered. The span at 30-40 (KWREREHRPDL) shows a compositional bias: basic and acidic residues. The MCM domain maps to 378 to 585 (LFKLIVNSLC…DHDHLLSEHV (208 aa)). 430-437 (GDPGLGKS) lines the ATP pocket. Phosphoserine is present on Ser-606.

It belongs to the MCM family. Component of the MCM8-MCM9 complex, which forms a hexamer composed of MCM8 and MCM9. Interacts with the DNA mismatch repair (MMR) complex composed at least of MSH2, MSH3, MSH6, PMS1 and MLH1. Interacts with RAD51; the interaction recruits RAD51 to DNA damage sites. Interacts with the MRN complex composed of MRE11, RAD50 and NBN/NBS1. Interacts with CDC6 and ORC2. Interacts with HROB; the interaction recruits the MCM8-MCM9 complex to DNA damage sites.

The protein resides in the nucleus. It is found in the chromosome. It carries out the reaction ATP + H2O = ADP + phosphate + H(+). In terms of biological role, component of the MCM8-MCM9 complex, a complex involved in the repair of double-stranded DNA breaks (DBSs) and DNA interstrand cross-links (ICLs) by homologous recombination (HR). Required for DNA resection by the MRE11-RAD50-NBN/NBS1 (MRN) complex by recruiting the MRN complex to the repair site and by promoting the complex nuclease activity. Probably by regulating the localization of the MNR complex, indirectly regulates the recruitment of downstream effector RAD51 to DNA damage sites including DBSs and ICLs. The MCM8-MCM9 complex is dispensable for DNA replication and S phase progression. However, may play a non-essential for DNA replication: may be involved in the activation of the prereplicative complex (pre-RC) during G(1) phase by recruiting CDC6 to the origin recognition complex (ORC). Probably by regulating HR, plays a key role during gametogenesis. Stabilizes MCM9 protein. This chain is DNA helicase MCM8 (MCM8), found in Bos taurus (Bovine).